The following is a 1211-amino-acid chain: DNA-directed RNA polymerase subunit beta' (1211 aa).

Residues Cys-60, Cys-62, Cys-75, and Cys-78 each contribute to the Zn(2+) site. Residues Asp-450, Asp-452, and Asp-454 each coordinate Mg(2+). Cys-819, Cys-893, Cys-900, and Cys-903 together coordinate Zn(2+).

This sequence belongs to the RNA polymerase beta' chain family. As to quaternary structure, the RNAP catalytic core consists of 2 alpha, 1 beta, 1 beta' and 1 omega subunit. When a sigma factor is associated with the core the holoenzyme is formed, which can initiate transcription. Mg(2+) is required as a cofactor. The cofactor is Zn(2+).

It catalyses the reaction RNA(n) + a ribonucleoside 5'-triphosphate = RNA(n+1) + diphosphate. In terms of biological role, DNA-dependent RNA polymerase catalyzes the transcription of DNA into RNA using the four ribonucleoside triphosphates as substrates. The sequence is that of DNA-directed RNA polymerase subunit beta' from Streptococcus equi subsp. zooepidemicus (strain H70).